Consider the following 272-residue polypeptide: Glycerol-3-phosphate acyltransferase (272 aa).

The next 6 helical transmembrane spans lie at 9-29, 60-80, 99-119, 149-169, 173-193, and 226-246; these read IIILFLFIGYFIGNILFGILI, AIVMVLDFFKSWFSTFVCLLI, VIIYLGGFAAIIGHCFPCFYF, ASISPWMFFICFVLFWSICLI, VSLASIVTVFLLPIWSLIPHL, and LNWWYILVTFLLELLTAVLVI.

Belongs to the PlsY family. In terms of assembly, probably interacts with PlsX.

It is found in the cell membrane. It carries out the reaction an acyl phosphate + sn-glycerol 3-phosphate = a 1-acyl-sn-glycero-3-phosphate + phosphate. It participates in lipid metabolism; phospholipid metabolism. Its function is as follows. Catalyzes the transfer of an acyl group from acyl-phosphate (acyl-PO(4)) to glycerol-3-phosphate (G3P) to form lysophosphatidic acid (LPA). This enzyme utilizes acyl-phosphate as fatty acyl donor, but not acyl-CoA or acyl-ACP. This Malacoplasma penetrans (strain HF-2) (Mycoplasma penetrans) protein is Glycerol-3-phosphate acyltransferase.